Reading from the N-terminus, the 212-residue chain is uncharacterized protein (212 aa).

The protein belongs to the mimivirus R683/R861 family.

This is an uncharacterized protein from Acanthamoeba polyphaga (Amoeba).